The sequence spans 591 residues: Aspartate--tRNA(Asp/Asn) ligase (591 aa).

Residue E176 coordinates L-aspartate. The interval 200-203 is aspartate; the sequence is QLFK. Residue R222 coordinates L-aspartate. Residues 222–224 and Q231 contribute to the ATP site; that span reads RDE. H450 serves as a coordination point for L-aspartate. E484 serves as a coordination point for ATP. Position 491 (R491) interacts with L-aspartate. ATP is bound at residue 536 to 539; that stretch reads GLDR.

The protein belongs to the class-II aminoacyl-tRNA synthetase family. Type 1 subfamily. In terms of assembly, homodimer.

The protein resides in the cytoplasm. The catalysed reaction is tRNA(Asx) + L-aspartate + ATP = L-aspartyl-tRNA(Asx) + AMP + diphosphate. Its function is as follows. Aspartyl-tRNA synthetase with relaxed tRNA specificity since it is able to aspartylate not only its cognate tRNA(Asp) but also tRNA(Asn). Reaction proceeds in two steps: L-aspartate is first activated by ATP to form Asp-AMP and then transferred to the acceptor end of tRNA(Asp/Asn). This is Aspartate--tRNA(Asp/Asn) ligase from Bacillus cereus (strain B4264).